Reading from the N-terminus, the 77-residue chain is Translation initiation factor IF-1, chloroplastic (77 aa).

Residues 1 to 71 enclose the S1-like domain; it reads MKEQKLIHEG…TKGRIIYRLR (71 aa).

The protein belongs to the IF-1 family. As to quaternary structure, component of the 30S ribosomal translation pre-initiation complex which assembles on the 30S ribosome in the order IF-2 and IF-3, IF-1 and N-formylmethionyl-tRNA(fMet); mRNA recruitment can occur at any time during PIC assembly.

Its subcellular location is the plastid. The protein localises to the chloroplast. One of the essential components for the initiation of protein synthesis. Stabilizes the binding of IF-2 and IF-3 on the 30S subunit to which N-formylmethionyl-tRNA(fMet) subsequently binds. Helps modulate mRNA selection, yielding the 30S pre-initiation complex (PIC). Upon addition of the 50S ribosomal subunit IF-1, IF-2 and IF-3 are released leaving the mature 70S translation initiation complex. This Drimys granadensis protein is Translation initiation factor IF-1, chloroplastic.